The chain runs to 326 residues: Homocysteine S-methyltransferase 1 (326 aa).

The Hcy-binding domain occupies 9 to 323 (LLEDLIKKCG…STINAISRDL (315 aa)). Zn(2+) is bound by residues Cys241, Cys308, and Cys309.

In terms of assembly, monomer. It depends on Zn(2+) as a cofactor. In terms of tissue distribution, expressed predominantly in roots. Expressed in rosette leaves, cauline leaves and developing seeds.

The enzyme catalyses S-methyl-L-methionine + L-homocysteine = 2 L-methionine + H(+). Its activity is regulated as follows. Strongly inhibited by methionine. Catalyzes methyl transfer from S-methylmethionine (SMM) to adenosyl-L-homocysteine (AdoMet). SMM degradation (by HMT-1, HMT-2 and HMT-3) and biosynthesis (by MMT1) constitute the SMM cycle in plants, which is probably required to achieve short term control of AdoMet level. This Arabidopsis thaliana (Mouse-ear cress) protein is Homocysteine S-methyltransferase 1 (HMT-1).